The primary structure comprises 87 residues: Large ribosomal subunit protein bL27 (87 aa).

It belongs to the bacterial ribosomal protein bL27 family.

The protein is Large ribosomal subunit protein bL27 of Renibacterium salmoninarum (strain ATCC 33209 / DSM 20767 / JCM 11484 / NBRC 15589 / NCIMB 2235).